The sequence spans 505 residues: Probable cytosol aminopeptidase (505 aa).

2 residues coordinate Mn(2+): lysine 269 and aspartate 274. Residue lysine 281 is part of the active site. The Mn(2+) site is built by aspartate 292, aspartate 351, and glutamate 353. Arginine 355 is an active-site residue.

The protein belongs to the peptidase M17 family. It depends on Mn(2+) as a cofactor.

The protein localises to the cytoplasm. It catalyses the reaction Release of an N-terminal amino acid, Xaa-|-Yaa-, in which Xaa is preferably Leu, but may be other amino acids including Pro although not Arg or Lys, and Yaa may be Pro. Amino acid amides and methyl esters are also readily hydrolyzed, but rates on arylamides are exceedingly low.. The enzyme catalyses Release of an N-terminal amino acid, preferentially leucine, but not glutamic or aspartic acids.. In terms of biological role, presumably involved in the processing and regular turnover of intracellular proteins. Catalyzes the removal of unsubstituted N-terminal amino acids from various peptides. The protein is Probable cytosol aminopeptidase of Rhodococcus jostii (strain RHA1).